The primary structure comprises 358 residues: Arogenate dehydrogenase 2, chloroplastic (358 aa).

The transit peptide at 1 to 36 (MLLHFSPAKPLISPPNLRRNSPTFLISPPRSLRIRA) directs the protein to the chloroplast. One can recognise a Prephenate/arogenate dehydrogenase domain in the interval 59 to 338 (LKIAVLGFGN…KKTEQKLLND (280 aa)). A disordered region spans residues 336 to 358 (LNDGGVVPMNDISSSSSSSSSSS). Positions 348 to 358 (SSSSSSSSSSS) are enriched in low complexity.

The protein belongs to the prephenate/arogenate dehydrogenase family. As to expression, expressed in roots, stems, leaves, flowers, siliques and seeds. More abundant in seeds.

It localises to the plastid. Its subcellular location is the chloroplast. The catalysed reaction is L-arogenate + NADP(+) = L-tyrosine + CO2 + NADPH. The protein operates within amino-acid biosynthesis; L-tyrosine biosynthesis; L-tyrosine from L-arogenate (NADP(+) route): step 1/1. In terms of biological role, involved in the biosynthesis of tyrosine. Has a weak prephenate dehydrogenase activity. The chain is Arogenate dehydrogenase 2, chloroplastic (TYRAAT2) from Arabidopsis thaliana (Mouse-ear cress).